The following is a 302-amino-acid chain: Large ribosomal subunit protein bL28m (302 aa).

This sequence belongs to the bacterial ribosomal protein bL28 family. In terms of assembly, component of the mitochondrial ribosome large subunit (39S) which comprises a 16S rRNA and about 50 distinct proteins.

The protein localises to the mitochondrion. In Drosophila melanogaster (Fruit fly), this protein is Large ribosomal subunit protein bL28m (mRpL28).